Here is a 298-residue protein sequence, read N- to C-terminus: Protoheme IX farnesyltransferase (298 aa).

Transmembrane regions (helical) follow at residues 16–36 (VVAL…PDMP), 45–65 (ALGF…NQLL), 93–113 (VFAG…VNVI), 114–134 (TAVL…VYLK), 141–161 (IVIG…AVTG), 172–192 (SLLV…LAIF), 218–238 (ILVY…VGMS), 241–261 (FYLG…WRML), and 277–297 (IVYL…LPWV).

Belongs to the UbiA prenyltransferase family. Protoheme IX farnesyltransferase subfamily.

The protein resides in the cell inner membrane. The catalysed reaction is heme b + (2E,6E)-farnesyl diphosphate + H2O = Fe(II)-heme o + diphosphate. It participates in porphyrin-containing compound metabolism; heme O biosynthesis; heme O from protoheme: step 1/1. Converts heme B (protoheme IX) to heme O by substitution of the vinyl group on carbon 2 of heme B porphyrin ring with a hydroxyethyl farnesyl side group. This Xanthomonas axonopodis pv. citri (strain 306) protein is Protoheme IX farnesyltransferase.